We begin with the raw amino-acid sequence, 426 residues long: Enolase (426 aa).

Residue Gln165 participates in (2R)-2-phosphoglycerate binding. Catalysis depends on Glu209, which acts as the Proton donor. Mg(2+) is bound by residues Asp244, Glu287, and Asp313. Residues Lys338, Arg367, Ser368, and Lys389 each coordinate (2R)-2-phosphoglycerate. Catalysis depends on Lys338, which acts as the Proton acceptor.

Belongs to the enolase family. Mg(2+) is required as a cofactor.

Its subcellular location is the cytoplasm. The protein localises to the secreted. It is found in the cell surface. The catalysed reaction is (2R)-2-phosphoglycerate = phosphoenolpyruvate + H2O. The protein operates within carbohydrate degradation; glycolysis; pyruvate from D-glyceraldehyde 3-phosphate: step 4/5. Its function is as follows. Catalyzes the reversible conversion of 2-phosphoglycerate (2-PG) into phosphoenolpyruvate (PEP). It is essential for the degradation of carbohydrates via glycolysis. This Methanococcus maripaludis (strain DSM 14266 / JCM 13030 / NBRC 101832 / S2 / LL) protein is Enolase.